Consider the following 462-residue polypeptide: Elongation factor 1-alpha 1 (462 aa).

Position 2 is a n,N,N-trimethylglycine (glycine 2). The 238-residue stretch at 5–242 folds into the tr-type G domain; sequence KTHINIVVIG…DCILPPTRPT (238 aa). The segment at 14–21 is G1; sequence GHVDSGKS. 14-21 serves as a coordination point for GTP; the sequence is GHVDSGKS. Lysine 36 bears the N6,N6,N6-trimethyllysine; alternate mark. Lysine 36 carries the post-translational modification N6,N6-dimethyllysine; alternate. Position 36 is an N6-methyllysine; alternate (lysine 36). Lysine 55 carries the post-translational modification N6,N6-dimethyllysine. The interval 70 to 74 is G2; sequence GITID. Lysine 79 bears the N6,N6,N6-trimethyllysine; by EEF1AKMT1 mark. Residues 91-94 form a G3 region; that stretch reads DAPG. 153-156 provides a ligand contact to GTP; it reads NKMD. The segment at 153–156 is G4; the sequence is NKMD. Lysine 165 carries the N6,N6,N6-trimethyllysine; alternate; by EEF1AKMT3 modification. Lysine 165 carries the N6,N6-dimethyllysine; alternate; by EEF1AKMT3 modification. An N6-acetyllysine; alternate modification is found at lysine 165. An N6-methyllysine; alternate; by EEF1AKMT3 modification is found at lysine 165. N6-acetyllysine is present on lysine 172. 194 to 196 provides a ligand contact to GTP; it reads SGW. The tract at residues 194–196 is G5; it reads SGW. At lysine 273 the chain carries N6-acetyllysine. Serine 300 carries the phosphoserine; by TGFBR1 modification. At glutamate 301 the chain carries 5-glutamyl glycerylphosphorylethanolamine. At lysine 318 the chain carries N6,N6,N6-trimethyllysine; by EEF1AKMT2. A 5-glutamyl glycerylphosphorylethanolamine modification is found at glutamate 374. A Glycyl lysine isopeptide (Lys-Gly) (interchain with G-Cter in ubiquitin) cross-link involves residue lysine 385. Lysine 392 carries the post-translational modification N6-acetyllysine; alternate. An N6-succinyllysine; alternate modification is found at lysine 392. A Phosphothreonine; by PASK modification is found at threonine 432. Residue lysine 439 is modified to N6-acetyllysine.

It belongs to the TRAFAC class translation factor GTPase superfamily. Classic translation factor GTPase family. EF-Tu/EF-1A subfamily. As to quaternary structure, found in a nuclear export complex with XPO5, EEF1A1, Ran and aminoacylated tRNA. Interacts with PARP1 and TXK. Interacts with KARS1. May interact with ERGIC2. Interacts with IFIT1 (via TPR repeats 4-7). Interacts with DLC1, facilitating distribution to the membrane periphery and ruffles upon growth factor stimulation. Interacts with ZPR1; the interaction occurs in a epidermal growth factor (EGF)-dependent manner. Interacts with PPP1R16B. Interacts with SPHK1 and SPHK2; both interactions increase SPHK1 and SPHK2 kinase activity. Interacts with guanyl-nucleotide exchange factor EEF1B2. Interacts (via middle-region) with HTATIP2 (via N-terminus); the interaction is direct and competes with EEF1A1 binding to guanyl-nucleotide exchange factor EEF1B2, thereby inhibiting GDP for GTP exchange and reactivation of EEF1A1. Interacts with tRNA. In terms of processing, ISGylated. Post-translationally, phosphorylated by TXK. Phosphorylation by PASK increases translation efficiency. Phosphorylated by ROCK2. Phosphorylation by TGFBR1 inhibits translation elongation. Trimethylated at Lys-79 by EEF1AKMT1. Methylated at Lys-165 by EEF1AKMT3, methylation by EEF1AKMT3 is dynamic as well as inducible by stress conditions, such as ER-stress, and plays a regulatory role on mRNA translation. Trimethylated at Lys-318 by EEF1AKMT2. Mono-, di-, and trimethylated at Lys-36 by EEF1AKMT4; trimethylated form is predominant. Methylation by EEF1AKMT4 contributes to the fine-tuning of translation rates for a subset of tRNAs. Trimethylated at Gly-2 by METTL13. Mono- and dimethylated at Lys-55 by METTL13; dimethylated form is predominant. In terms of processing, ubiquitinated at Lys-385 by RNF14 in response to ribosome collisions (ribosome stalling), leading to its degradation by the proteasome and rescue of stalled ribosomes.

It localises to the cytoplasm. It is found in the nucleus. The protein localises to the nucleolus. Its subcellular location is the cell membrane. It catalyses the reaction GTP + H2O = GDP + phosphate + H(+). In terms of biological role, translation elongation factor that catalyzes the GTP-dependent binding of aminoacyl-tRNA (aa-tRNA) to the A-site of ribosomes during the elongation phase of protein synthesis. Base pairing between the mRNA codon and the aa-tRNA anticodon promotes GTP hydrolysis, releasing the aa-tRNA from EEF1A1 and allowing its accommodation into the ribosome. The growing protein chain is subsequently transferred from the P-site peptidyl tRNA to the A-site aa-tRNA, extending it by one amino acid through ribosome-catalyzed peptide bond formation. Also plays a role in the positive regulation of IFNG transcription in T-helper 1 cells as part of an IFNG promoter-binding complex with TXK and PARP1. Also plays a role in cytoskeleton organization by promoting actin bundling. The protein is Elongation factor 1-alpha 1 (EEF1A1) of Cricetulus griseus (Chinese hamster).